The primary structure comprises 639 residues: Chaperone protein DnaK (639 aa).

Threonine 198 is modified (phosphothreonine; by autocatalysis). The segment at 602 to 639 (QAKSQAQGGDNADAGKQANATADDVVDAEFEEVKDDKK) is disordered. Acidic residues predominate over residues 625–639 (DVVDAEFEEVKDDKK).

This sequence belongs to the heat shock protein 70 family.

Acts as a chaperone. The sequence is that of Chaperone protein DnaK from Shewanella baltica (strain OS155 / ATCC BAA-1091).